Here is a 392-residue protein sequence, read N- to C-terminus: Succinate--CoA ligase [ADP-forming] subunit beta (392 aa).

An ATP-grasp domain is found at 9–248 (KEILRGFGVT…TSEEDPLEVE (240 aa)). Residues K50, 57 to 59 (GRG), E103, M106, and E111 contribute to the ATP site. The Mg(2+) site is built by N203 and D217. Residues N268 and 325–327 (GIV) contribute to the substrate site.

The protein belongs to the succinate/malate CoA ligase beta subunit family. In terms of assembly, heterotetramer of two alpha and two beta subunits. The cofactor is Mg(2+).

The catalysed reaction is succinate + ATP + CoA = succinyl-CoA + ADP + phosphate. It carries out the reaction GTP + succinate + CoA = succinyl-CoA + GDP + phosphate. The protein operates within carbohydrate metabolism; tricarboxylic acid cycle; succinate from succinyl-CoA (ligase route): step 1/1. Its function is as follows. Succinyl-CoA synthetase functions in the citric acid cycle (TCA), coupling the hydrolysis of succinyl-CoA to the synthesis of either ATP or GTP and thus represents the only step of substrate-level phosphorylation in the TCA. The beta subunit provides nucleotide specificity of the enzyme and binds the substrate succinate, while the binding sites for coenzyme A and phosphate are found in the alpha subunit. The protein is Succinate--CoA ligase [ADP-forming] subunit beta of Chloroherpeton thalassium (strain ATCC 35110 / GB-78).